The chain runs to 87 residues: Small ribosomal subunit protein uS15 (87 aa).

The tract at residues 1–22 (MSEINKAEIVASNARAPSDTGS) is disordered.

This sequence belongs to the universal ribosomal protein uS15 family. As to quaternary structure, part of the 30S ribosomal subunit. Forms a bridge to the 50S subunit in the 70S ribosome, contacting the 23S rRNA.

In terms of biological role, one of the primary rRNA binding proteins, it binds directly to 16S rRNA where it helps nucleate assembly of the platform of the 30S subunit by binding and bridging several RNA helices of the 16S rRNA. Its function is as follows. Forms an intersubunit bridge (bridge B4) with the 23S rRNA of the 50S subunit in the ribosome. The chain is Small ribosomal subunit protein uS15 from Leptothrix cholodnii (strain ATCC 51168 / LMG 8142 / SP-6) (Leptothrix discophora (strain SP-6)).